We begin with the raw amino-acid sequence, 170 residues long: Adenine phosphoribosyltransferase (170 aa).

The protein belongs to the purine/pyrimidine phosphoribosyltransferase family. As to quaternary structure, homodimer.

It is found in the cytoplasm. The catalysed reaction is AMP + diphosphate = 5-phospho-alpha-D-ribose 1-diphosphate + adenine. It participates in purine metabolism; AMP biosynthesis via salvage pathway; AMP from adenine: step 1/1. In terms of biological role, catalyzes a salvage reaction resulting in the formation of AMP, that is energically less costly than de novo synthesis. This is Adenine phosphoribosyltransferase from Bacillus licheniformis (strain ATCC 14580 / DSM 13 / JCM 2505 / CCUG 7422 / NBRC 12200 / NCIMB 9375 / NCTC 10341 / NRRL NRS-1264 / Gibson 46).